The chain runs to 215 residues: Large ribosomal subunit protein uL1 (215 aa).

Belongs to the universal ribosomal protein uL1 family. Part of the 50S ribosomal subunit.

Functionally, binds directly to 23S rRNA. Probably involved in E site tRNA release. In terms of biological role, protein L1 is also a translational repressor protein, it controls the translation of its operon by binding to its mRNA. This is Large ribosomal subunit protein uL1 from Methanospirillum hungatei JF-1 (strain ATCC 27890 / DSM 864 / NBRC 100397 / JF-1).